Here is a 691-residue protein sequence, read N- to C-terminus: Beta-galactosidase III (691 aa).

Residues R121 and N159 each contribute to the substrate site. Catalysis depends on E160, which acts as the Proton donor. The active-site Nucleophile is E318. Residues W326 and E366 to H369 each bind substrate.

The protein belongs to the glycosyl hydrolase 42 family.

It carries out the reaction Hydrolysis of terminal non-reducing beta-D-galactose residues in beta-D-galactosides.. Specific for beta-D-anomer-linked galactoside substrates. Hydrolyzes o-nitrophenyl-beta-D-galactopyranoside (ONPG), chromogen 5-bromo-4-chloro-3-indolyl-beta-D-galactopyranoside (X-gal) and to a lesser extent lactose. Hydrolyzes p-nitrophenyl-beta-D-galacturonide very slightly. Does not hydrolyze maltose, sucrose, raffinose or melibiose. Has some transgalactosylation activity yielding galacto-oligosaccharides (GaOS), including O-beta-D-galactopyranosyl-(1,3)-O-beta-D-galactopyranosyl-(1-4)-D-glucopyranose. The chain is Beta-galactosidase III from Bifidobacterium longum subsp. infantis.